We begin with the raw amino-acid sequence, 688 residues long: MAADLVLEIGTEEIPARFLPPALAELAEKGRALLAEYRLAYADLAAYGTPRRLTLYVRDLAGDQAPLVQEIKGPPKKAAFDIDGVPTKAALGFARSQGVAVEDLVTRAVGPVEYVYAVRQETGRPAAEILAELGPRLIGALVFPRPMRWGDQDFRFVRPIRWILCVHGDRVIEFTVAGVRSGPHTWGHRFLSAGRLLVTTAGDYFTLLEENFVIVDPARRREMVWEQVRAAAAAESGTVADDPELLAEVADLLEYPSAFCGCFPESYLELPEPVLVTPMREHQRYFPVRDGTGRLMPFFVGVHNGTAEHLNLIRSGNEKVLRARLADAAFFFREDLEVPLPDRGPELKKVVFQESLGTMHEKVERLTALAGYLSSALGLDETERAQAHRAAVLSKNDLLTSMVYEFPELQGIMGREYALRAGEAPAVAEAIREQYLPAPGGEELPATRAGLVLALADRADNLVGAFGMGVQPTGSQDPYALRRQALGICHLLLDTPAYLDLDDFFREAYAAYGGRLTVEAGEVAAQLADFFGQRLRVLFQDRGLSYGVVEAALAAGHADVRDAWERATAVATFQSHPAFADISTAFTRANNLAKNAAGTRVEPALFKDPVEHTLYQAFLQVREQVEAQIARRRYGAALAALAELREPVDRFFDGVMVMVEEAAVRENRLALLRLVADLFKGIADLSKF.

Belongs to the class-II aminoacyl-tRNA synthetase family. As to quaternary structure, tetramer of two alpha and two beta subunits.

It is found in the cytoplasm. It catalyses the reaction tRNA(Gly) + glycine + ATP = glycyl-tRNA(Gly) + AMP + diphosphate. The chain is Glycine--tRNA ligase beta subunit from Desulforudis audaxviator (strain MP104C).